Reading from the N-terminus, the 549-residue chain is Oxygen-dependent choline dehydrogenase (549 aa).

4–33 provides a ligand contact to FAD; sequence DFVIIGSGSAGSALAYRLSEDGRNSVIVLE. Residue H465 is the Proton acceptor of the active site.

It belongs to the GMC oxidoreductase family. The cofactor is FAD.

Its subcellular location is the cell membrane. It carries out the reaction choline + A = betaine aldehyde + AH2. The catalysed reaction is betaine aldehyde + NAD(+) + H2O = glycine betaine + NADH + 2 H(+). The protein operates within amine and polyamine biosynthesis; betaine biosynthesis via choline pathway; betaine aldehyde from choline (cytochrome c reductase route): step 1/1. Its function is as follows. Involved in the biosynthesis of the osmoprotectant glycine betaine. Catalyzes the oxidation of choline to betaine aldehyde and betaine aldehyde to glycine betaine at the same rate. In Rhizobium meliloti (strain 1021) (Ensifer meliloti), this protein is Oxygen-dependent choline dehydrogenase.